Here is a 141-residue protein sequence, read N- to C-terminus: Ribonuclease VapC2 (141 aa).

One can recognise a PINc domain in the interval 7–129; the sequence is LIDKSALVRL…FDAIAALTGQ (123 aa). Residues aspartate 99, aspartate 117, and aspartate 119 each contribute to the Mg(2+) site.

This sequence belongs to the PINc/VapC protein family. Probably active as a homodimer. The cofactor is Mg(2+).

In terms of biological role, toxic component of a type II toxin-antitoxin (TA) system. Acts as an RNase. All its toxic effects are neutralized by coexpression with cognate antitoxin VapB2. The polypeptide is Ribonuclease VapC2 (Mycobacterium tuberculosis (strain CDC 1551 / Oshkosh)).